A 461-amino-acid chain; its full sequence is tRNA modification GTPase MnmE (461 aa).

R23, E88, and R127 together coordinate (6S)-5-formyl-5,6,7,8-tetrahydrofolate. A TrmE-type G domain is found at 223–382 (GLNTVIVGKP…VEEALVEIVY (160 aa)). Residue N233 participates in K(+) binding. GTP contacts are provided by residues 233 to 238 (NVGKSS), 252 to 258 (TEVPGTT), and 277 to 280 (DTAG). Residue S237 coordinates Mg(2+). Residues T252, V254, and T257 each coordinate K(+). T258 provides a ligand contact to Mg(2+). K461 provides a ligand contact to (6S)-5-formyl-5,6,7,8-tetrahydrofolate.

Belongs to the TRAFAC class TrmE-Era-EngA-EngB-Septin-like GTPase superfamily. TrmE GTPase family. Homodimer. Heterotetramer of two MnmE and two MnmG subunits. Requires K(+) as cofactor.

The protein localises to the cytoplasm. Its function is as follows. Exhibits a very high intrinsic GTPase hydrolysis rate. Involved in the addition of a carboxymethylaminomethyl (cmnm) group at the wobble position (U34) of certain tRNAs, forming tRNA-cmnm(5)s(2)U34. This Alkaliphilus metalliredigens (strain QYMF) protein is tRNA modification GTPase MnmE.